Reading from the N-terminus, the 840-residue chain is DNA mismatch repair protein MutS (840 aa).

601-608 contacts ATP; the sequence is GPNMSGKS.

The protein belongs to the DNA mismatch repair MutS family.

In terms of biological role, this protein is involved in the repair of mismatches in DNA. It is possible that it carries out the mismatch recognition step. This protein has a weak ATPase activity. This is DNA mismatch repair protein MutS from Lactococcus lactis subsp. cremoris (strain MG1363).